The following is a 776-amino-acid chain: Mitochondrial intermediate peptidase (776 aa).

A mitochondrion-targeting transit peptide spans 1 to 28 (MRRFSTLSRRLQRVVPASSASTANTSPS). Zn(2+) is bound at residue H561. E562 is a catalytic residue. Zn(2+)-binding residues include H565 and H568.

This sequence belongs to the peptidase M3 family. Requires Zn(2+) as cofactor.

The protein resides in the mitochondrion matrix. The enzyme catalyses Release of an N-terminal octapeptide as second stage of processing of some proteins imported into the mitochondrion.. Cleaves proteins, imported into the mitochondrion, to their mature size. While most mitochondrial precursor proteins are processed to the mature form in one step by mitochondrial processing peptidase (MPP), the sequential cleavage by MIP of an octapeptide after initial processing by MPP is a required step for a subgroup of nuclear-encoded precursor proteins destined for the matrix or the inner membrane. The protein is Mitochondrial intermediate peptidase (OCT1) of Yarrowia lipolytica (strain CLIB 122 / E 150) (Yeast).